A 108-amino-acid polypeptide reads, in one-letter code: UPF0060 membrane protein BH2744 (108 aa).

4 consecutive transmembrane segments (helical) span residues 6–26, 31–51, 60–80, and 86–106; these read TLFL…WLWL, PVYL…IATF, VYAA…WWID, and TYDW…LWAP.

It belongs to the UPF0060 family.

The protein resides in the cell membrane. In Halalkalibacterium halodurans (strain ATCC BAA-125 / DSM 18197 / FERM 7344 / JCM 9153 / C-125) (Bacillus halodurans), this protein is UPF0060 membrane protein BH2744.